The primary structure comprises 591 residues: Aspartate--tRNA(Asp/Asn) ligase (591 aa).

Glu-176 lines the L-aspartate pocket. Residues 200 to 203 (QLFK) are aspartate. Residue Arg-222 coordinates L-aspartate. Residues 222–224 (RDE) and Gln-231 each bind ATP. L-aspartate is bound at residue His-450. Glu-484 lines the ATP pocket. Arg-491 is a binding site for L-aspartate. ATP is bound at residue 536–539 (GLDR).

The protein belongs to the class-II aminoacyl-tRNA synthetase family. Type 1 subfamily. In terms of assembly, homodimer.

It localises to the cytoplasm. It catalyses the reaction tRNA(Asx) + L-aspartate + ATP = L-aspartyl-tRNA(Asx) + AMP + diphosphate. Functionally, aspartyl-tRNA synthetase with relaxed tRNA specificity since it is able to aspartylate not only its cognate tRNA(Asp) but also tRNA(Asn). Reaction proceeds in two steps: L-aspartate is first activated by ATP to form Asp-AMP and then transferred to the acceptor end of tRNA(Asp/Asn). This is Aspartate--tRNA(Asp/Asn) ligase from Bacillus anthracis (strain CDC 684 / NRRL 3495).